A 347-amino-acid polypeptide reads, in one-letter code: MHFIDQAEIEVQGGNGGDGIVAFRREKYVPAGGPSGGNGGRGGSVILVADPGLQTLLDFRFQPVIKAEHGAKGGPNHRSGASGADRLVRVPCGTVVFNAETGELLGDLVGKGDQLLVARGGKGGLGNAHFLSNHNRAPRQFTKGEAGERVRLRLELKLIAEVGIVGLPNAGKSTLISVVSSARPKIADYPFTTLQPNLGVVPHPSGDGVVFADIPGLIEGAHLGVGLGHEFLRHVERTRVLIHLVDGTAADPVKDYQVIQQELRAYGHGLIDKPQILVLNKIDVLDPQQVAERAQRLSAAAGTSVVTISAIAKQGLDPLLQRVWQCLGRGSQQPAQLDLVGAKSIQS.

In terms of domain architecture, Obg spans 1–159 (MHFIDQAEIE…VRLRLELKLI (159 aa)). The 169-residue stretch at 160–328 (AEVGIVGLPN…LLQRVWQCLG (169 aa)) folds into the OBG-type G domain. GTP-binding positions include 166–173 (GLPNAGKS), 191–195 (FTTLQ), 213–216 (DIPG), 280–283 (NKID), and 309–311 (SAI). Mg(2+) is bound by residues serine 173 and threonine 193.

This sequence belongs to the TRAFAC class OBG-HflX-like GTPase superfamily. OBG GTPase family. As to quaternary structure, monomer. It depends on Mg(2+) as a cofactor.

The protein localises to the cytoplasm. Its function is as follows. An essential GTPase which binds GTP, GDP and possibly (p)ppGpp with moderate affinity, with high nucleotide exchange rates and a fairly low GTP hydrolysis rate. Plays a role in control of the cell cycle, stress response, ribosome biogenesis and in those bacteria that undergo differentiation, in morphogenesis control. The polypeptide is GTPase Obg (Synechococcus sp. (strain JA-2-3B'a(2-13)) (Cyanobacteria bacterium Yellowstone B-Prime)).